Reading from the N-terminus, the 402-residue chain is Acetate kinase (402 aa).

N7 contributes to the Mg(2+) binding site. K14 provides a ligand contact to ATP. R95 is a binding site for substrate. D152 acts as the Proton donor/acceptor in catalysis. ATP contacts are provided by residues 212–216 (HLGNG), 286–288 (DMR), and 334–338 (GIGEN). E388 is a binding site for Mg(2+).

It belongs to the acetokinase family. In terms of assembly, homodimer. Mg(2+) is required as a cofactor. It depends on Mn(2+) as a cofactor.

Its subcellular location is the cytoplasm. The catalysed reaction is acetate + ATP = acetyl phosphate + ADP. Its pathway is metabolic intermediate biosynthesis; acetyl-CoA biosynthesis; acetyl-CoA from acetate: step 1/2. Functionally, catalyzes the formation of acetyl phosphate from acetate and ATP. Can also catalyze the reverse reaction. This Oleidesulfovibrio alaskensis (strain ATCC BAA-1058 / DSM 17464 / G20) (Desulfovibrio alaskensis) protein is Acetate kinase.